The primary structure comprises 66 residues: Beta-defensin 13 (66 aa).

The N-terminal stretch at 1-22 (MRIFSLIVAGLVLLIQLHPAKG) is a signal peptide. Cystine bridges form between C30/C59, C37/C51, and C41/C60.

Belongs to the beta-defensin family.

The protein resides in the secreted. Functionally, has antibacterial activity. This chain is Beta-defensin 13 (Defb13), found in Rattus norvegicus (Rat).